The chain runs to 365 residues: Alanine racemase (365 aa).

Lysine 32 serves as the catalytic Proton acceptor; specific for D-alanine. Lysine 32 carries the N6-(pyridoxal phosphate)lysine modification. Position 128 (arginine 128) interacts with substrate. The active-site Proton acceptor; specific for L-alanine is tyrosine 257. Residue methionine 305 coordinates substrate.

This sequence belongs to the alanine racemase family. Requires pyridoxal 5'-phosphate as cofactor.

It catalyses the reaction L-alanine = D-alanine. It functions in the pathway amino-acid biosynthesis; D-alanine biosynthesis; D-alanine from L-alanine: step 1/1. In terms of biological role, catalyzes the interconversion of L-alanine and D-alanine. May also act on other amino acids. In Francisella tularensis subsp. mediasiatica (strain FSC147), this protein is Alanine racemase (alr).